The chain runs to 594 residues: DNA ligase (594 aa).

Residue E256 coordinates ATP. The N6-AMP-lysine intermediate role is filled by K258. ATP is bound by residues R263, R279, E309, F349, R426, and K432.

It belongs to the ATP-dependent DNA ligase family. The cofactor is Mg(2+).

It carries out the reaction ATP + (deoxyribonucleotide)n-3'-hydroxyl + 5'-phospho-(deoxyribonucleotide)m = (deoxyribonucleotide)n+m + AMP + diphosphate.. In terms of biological role, DNA ligase that seals nicks in double-stranded DNA during DNA replication, DNA recombination and DNA repair. The polypeptide is DNA ligase (Ignicoccus hospitalis (strain KIN4/I / DSM 18386 / JCM 14125)).